The chain runs to 361 residues: Phenylalanine--tRNA ligase alpha subunit (361 aa).

A Mg(2+)-binding site is contributed by E260.

It belongs to the class-II aminoacyl-tRNA synthetase family. Phe-tRNA synthetase alpha subunit type 1 subfamily. Tetramer of two alpha and two beta subunits. Mg(2+) serves as cofactor.

Its subcellular location is the cytoplasm. The catalysed reaction is tRNA(Phe) + L-phenylalanine + ATP = L-phenylalanyl-tRNA(Phe) + AMP + diphosphate + H(+). The chain is Phenylalanine--tRNA ligase alpha subunit from Bartonella quintana (strain Toulouse) (Rochalimaea quintana).